The sequence spans 86 residues: YcgL domain-containing protein XAC4085 (86 aa).

The 83-residue stretch at 1 to 83 (MHAYVYKSQR…PKTIVLAGEC (83 aa)) folds into the YcgL domain.

In Xanthomonas axonopodis pv. citri (strain 306), this protein is YcgL domain-containing protein XAC4085.